Reading from the N-terminus, the 366-residue chain is Anhydro-N-acetylmuramic acid kinase (366 aa).

10–17 provides a ligand contact to ATP; it reads GTSMDGID.

It belongs to the anhydro-N-acetylmuramic acid kinase family.

It catalyses the reaction 1,6-anhydro-N-acetyl-beta-muramate + ATP + H2O = N-acetyl-D-muramate 6-phosphate + ADP + H(+). The protein operates within amino-sugar metabolism; 1,6-anhydro-N-acetylmuramate degradation. It participates in cell wall biogenesis; peptidoglycan recycling. Catalyzes the specific phosphorylation of 1,6-anhydro-N-acetylmuramic acid (anhMurNAc) with the simultaneous cleavage of the 1,6-anhydro ring, generating MurNAc-6-P. Is required for the utilization of anhMurNAc either imported from the medium or derived from its own cell wall murein, and thus plays a role in cell wall recycling. This Legionella pneumophila (strain Lens) protein is Anhydro-N-acetylmuramic acid kinase.